We begin with the raw amino-acid sequence, 158 residues long: Small ribosomal subunit protein uS19 (158 aa).

The protein belongs to the universal ribosomal protein uS19 family.

In terms of biological role, protein S19 forms a complex with S13 that binds strongly to the 16S ribosomal RNA. The sequence is that of Small ribosomal subunit protein uS19 from Pyrobaculum neutrophilum (strain DSM 2338 / JCM 9278 / NBRC 100436 / V24Sta) (Thermoproteus neutrophilus).